The sequence spans 182 residues: Probable tyrosine phosphatase protein H4 (182 aa).

A Tyrosine-protein phosphatase domain is found at 1-182 (MEINKFICSQ…TVLKIQKSKI (182 aa)). The active-site Phosphocysteine intermediate is C142.

This sequence belongs to the protein-tyrosine phosphatase family.

It carries out the reaction O-phospho-L-tyrosyl-[protein] + H2O = L-tyrosyl-[protein] + phosphate. The polypeptide is Probable tyrosine phosphatase protein H4 (H5) (Microplitis demolitor (Parasitoid wasp)).